The following is a 294-amino-acid chain: tRNA dimethylallyltransferase (294 aa).

Residue 7–14 (GPTGSGKS) participates in ATP binding. Residue 9–14 (TGSGKS) coordinates substrate.

It belongs to the IPP transferase family. Monomer. Requires Mg(2+) as cofactor.

The enzyme catalyses adenosine(37) in tRNA + dimethylallyl diphosphate = N(6)-dimethylallyladenosine(37) in tRNA + diphosphate. Functionally, catalyzes the transfer of a dimethylallyl group onto the adenine at position 37 in tRNAs that read codons beginning with uridine, leading to the formation of N6-(dimethylallyl)adenosine (i(6)A). This is tRNA dimethylallyltransferase from Akkermansia muciniphila (strain ATCC BAA-835 / DSM 22959 / JCM 33894 / BCRC 81048 / CCUG 64013 / CIP 107961 / Muc).